Here is a 253-residue protein sequence, read N- to C-terminus: 5'-nucleotidase SurE (253 aa).

A divalent metal cation-binding residues include aspartate 8, aspartate 9, serine 40, and asparagine 93.

It belongs to the SurE nucleotidase family. It depends on a divalent metal cation as a cofactor.

The protein localises to the cytoplasm. The catalysed reaction is a ribonucleoside 5'-phosphate + H2O = a ribonucleoside + phosphate. Functionally, nucleotidase that shows phosphatase activity on nucleoside 5'-monophosphates. This Methylobacterium nodulans (strain LMG 21967 / CNCM I-2342 / ORS 2060) protein is 5'-nucleotidase SurE.